We begin with the raw amino-acid sequence, 119 residues long: Ribonuclease (119 aa).

Substrate contacts are provided by Lys6 and Arg9. His11 (proton acceptor) is an active-site residue. Disulfide bonds link Cys26–Cys81, Cys40–Cys92, and Cys58–Cys107. Substrate contacts are provided by residues 41 to 45 (KFTNT) and Arg82. His114 functions as the Proton donor in the catalytic mechanism.

Belongs to the pancreatic ribonuclease family. As to quaternary structure, monomer. Interacts with and forms tight 1:1 complexes with RNH1. Dimerization of two such complexes may occur. Interaction with RNH1 inhibits this protein. Pancreas.

Its subcellular location is the secreted. It carries out the reaction an [RNA] containing cytidine + H2O = an [RNA]-3'-cytidine-3'-phosphate + a 5'-hydroxy-ribonucleotide-3'-[RNA].. The enzyme catalyses an [RNA] containing uridine + H2O = an [RNA]-3'-uridine-3'-phosphate + a 5'-hydroxy-ribonucleotide-3'-[RNA].. Functionally, endonuclease that catalyzes the cleavage of RNA on the 3' side of pyrimidine nucleotides. Acts on single-stranded and double-stranded RNA. The sequence is that of Ribonuclease from Chelydra serpentina (Snapping turtle).